The following is a 1132-amino-acid chain: Protein CROWDED NUCLEI 1 (1132 aa).

The disordered stretch occupies residues 1-31; it reads MSTPLKVWQRWSTPTKATNPDSNGSSHGTGL. Positions 10 to 28 are enriched in polar residues; it reads RWSTPTKATNPDSNGSSHG. The stretch at 73 to 714 forms a coiled coil; that stretch reads LLIEKKEWSS…KKLKEQREQF (642 aa). 2 short sequence motifs (nuclear localization signal) span residues 379–386 and 693–700; these read EKREAEWK and IRKDVDDL. A phosphoserine mark is found at Ser-774 and Ser-803. Residues 849 to 859 show a composition bias toward basic and acidic residues; the sequence is AESETGTKEVE. 4 disordered regions span residues 849–871, 883–909, 924–1039, and 1061–1132; these read AESETGTKEVEVTNVNSDGDQSD, SLSNLDVDGQSRMKGKGKARTRRTRSV, INLY…VQQE, and GVST…FLTT. Residues 861–871 show a composition bias toward polar residues; sequence TNVNSDGDQSD. A phosphoserine mark is found at Ser-865 and Ser-883. Positions 895 to 907 are enriched in basic residues; it reads MKGKGKARTRRTR. The residue at position 908 (Ser-908) is a Phosphoserine. Ser-1093, Ser-1105, and Ser-1112 each carry phosphoserine. Residues 1095–1105 are compositionally biased toward basic and acidic residues; the sequence is DVNKTPLRADS.

This sequence belongs to the CRWN family. In terms of assembly, core component of the LINC complex which is composed of inner nuclear membrane SUN domain-containing proteins coupled to outer nuclear membrane WIP and WIT proteins. The LINC complex also involves nucleoskeletal proteins CRWN/LINC and possibly KAKU4 and the cytoskeletal myosin KAKU1. Interacts with SUN1 and SUN2. Binds to KAKU4. In terms of tissue distribution, expressed at low levels in roots, leaves, flowers and flower stalks.

The protein resides in the nucleus membrane. It localises to the nucleus. It is found in the nucleoplasm. The protein localises to the nucleus lamina. Component of SUN-protein-containing multivariate complexes also called LINC complexes which link the nucleoskeleton and cytoskeleton by providing versatile outer nuclear membrane attachment sites for cytoskeletal filaments. Required for nucleus structure organization (e.g. size and shape). This chain is Protein CROWDED NUCLEI 1, found in Arabidopsis thaliana (Mouse-ear cress).